We begin with the raw amino-acid sequence, 103 residues long: Small ribosomal subunit protein uS10 (103 aa).

This sequence belongs to the universal ribosomal protein uS10 family. Part of the 30S ribosomal subunit.

Involved in the binding of tRNA to the ribosomes. This Aliivibrio fischeri (strain ATCC 700601 / ES114) (Vibrio fischeri) protein is Small ribosomal subunit protein uS10.